Consider the following 30-residue polypeptide: Cyclotide mech-1 (30 aa).

Positions 1–30 (GVIPCGESCVFIPCINKKKCSCKNKVCYRD) form a cross-link, cyclopeptide (Gly-Asp). Disulfide bonds link Cys5-Cys20, Cys9-Cys22, and Cys14-Cys27.

Post-translationally, this is a cyclic peptide. In terms of processing, contains 3 disulfide bonds.

In terms of biological role, probably participates in a plant defense mechanism (Potential). Binds to and induces leakage in phospholipd membranes, particularly ones containing 1-palmitoyl-2-oleophosphatidylethanolamine (POPE). Not active against Gram-negative bacterium E.coli ATCC 25922 or Gram-positive bacterium S.aureus ATCC 25923 up to a concentration of 64 uM. The polypeptide is Cyclotide mech-1 (Melicytus chathamicus (Chatham Island mahoe)).